The chain runs to 316 residues: uncharacterized protein (316 aa).

This sequence to yeast YGR277c.

This is an uncharacterized protein from Schizosaccharomyces pombe (strain 972 / ATCC 24843) (Fission yeast).